A 948-amino-acid chain; its full sequence is UvrABC system protein A (948 aa).

Gly-33–Ser-40 contacts ATP. A C4-type zinc finger spans residues Cys-252–Cys-279. 2 consecutive ABC transporter domains span residues Trp-309 to Leu-587 and Ala-607 to Lys-935. Gly-639–Ser-646 is an ATP binding site. Residues Cys-738–Cys-764 form a C4-type zinc finger.

Belongs to the ABC transporter superfamily. UvrA family. Forms a heterotetramer with UvrB during the search for lesions.

It is found in the cytoplasm. Functionally, the UvrABC repair system catalyzes the recognition and processing of DNA lesions. UvrA is an ATPase and a DNA-binding protein. A damage recognition complex composed of 2 UvrA and 2 UvrB subunits scans DNA for abnormalities. When the presence of a lesion has been verified by UvrB, the UvrA molecules dissociate. In Staphylococcus aureus (strain MSSA476), this protein is UvrABC system protein A.